The following is an 891-amino-acid chain: Protein translocase subunit SecA 1 (891 aa).

ATP-binding positions include glutamine 85, 103 to 107, and aspartate 491; that span reads GEGKT. 4 residues coordinate Zn(2+): cysteine 877, cysteine 879, cysteine 888, and cysteine 889.

Belongs to the SecA family. As to quaternary structure, monomer and homodimer. Part of the essential Sec protein translocation apparatus which comprises SecA, SecYEG and auxiliary proteins SecDF. Other proteins may also be involved. Requires Zn(2+) as cofactor.

The protein localises to the cell membrane. Its subcellular location is the cytoplasm. It carries out the reaction ATP + H2O + cellular proteinSide 1 = ADP + phosphate + cellular proteinSide 2.. Part of the Sec protein translocase complex. Interacts with the SecYEG preprotein conducting channel. Has a central role in coupling the hydrolysis of ATP to the transfer of proteins into and across the cell membrane, serving as an ATP-driven molecular motor driving the stepwise translocation of polypeptide chains across the membrane. The chain is Protein translocase subunit SecA 1 from Clostridioides difficile (strain 630) (Peptoclostridium difficile).